Here is a 118-residue protein sequence, read N- to C-terminus: Small ribosomal subunit protein uS13 (118 aa).

Residues 94-118 (SLPVRGQRTKTNARTRKGPRKPIKK) form a disordered region.

It belongs to the universal ribosomal protein uS13 family. Part of the 30S ribosomal subunit. Forms a loose heterodimer with protein S19. Forms two bridges to the 50S subunit in the 70S ribosome.

Functionally, located at the top of the head of the 30S subunit, it contacts several helices of the 16S rRNA. In the 70S ribosome it contacts the 23S rRNA (bridge B1a) and protein L5 of the 50S subunit (bridge B1b), connecting the 2 subunits; these bridges are implicated in subunit movement. Contacts the tRNAs in the A and P-sites. The sequence is that of Small ribosomal subunit protein uS13 from Actinobacillus pleuropneumoniae serotype 5b (strain L20).